A 341-amino-acid chain; its full sequence is tRNA N6-adenosine threonylcarbamoyltransferase (341 aa).

The Fe cation site is built by histidine 111 and histidine 115. Residues 134 to 138 (LVSGG), aspartate 167, glycine 180, and asparagine 276 contribute to the substrate site. Aspartate 304 contributes to the Fe cation binding site.

Belongs to the KAE1 / TsaD family. Fe(2+) is required as a cofactor.

The protein resides in the cytoplasm. The catalysed reaction is L-threonylcarbamoyladenylate + adenosine(37) in tRNA = N(6)-L-threonylcarbamoyladenosine(37) in tRNA + AMP + H(+). Required for the formation of a threonylcarbamoyl group on adenosine at position 37 (t(6)A37) in tRNAs that read codons beginning with adenine. Is involved in the transfer of the threonylcarbamoyl moiety of threonylcarbamoyl-AMP (TC-AMP) to the N6 group of A37, together with TsaE and TsaB. TsaD likely plays a direct catalytic role in this reaction. This chain is tRNA N6-adenosine threonylcarbamoyltransferase, found in Pseudomonas fluorescens (strain ATCC BAA-477 / NRRL B-23932 / Pf-5).